We begin with the raw amino-acid sequence, 329 residues long: Glycosyltransferase family protein 64 C3 (329 aa).

The first 27 residues, 1 to 27 (MGVKSVRFSIWFLFVVTDLVFCRTLSG), serve as a signal peptide directing secretion. An N-linked (GlcNAc...) asparagine glycan is attached at asparagine 99. Substrate-binding positions include 118-123 (SSLNAR), 139-141 (DDD), arginine 169, 226-230 (RNCED), and 271-284 (VGLS…RKRR). A Mn(2+)-binding site is contributed by aspartate 141. An intrachain disulfide couples cysteine 228 to cysteine 287. The active site involves aspartate 230. The segment at 268 to 284 (VRDVGLSSRRVEHRKRR) is substrate binding.

Belongs to the glycosyltransferase 64 family. Mn(2+) is required as a cofactor.

Its pathway is protein modification; protein glycosylation. In terms of biological role, probable glycosyltransferase. The polypeptide is Glycosyltransferase family protein 64 C3 (Arabidopsis thaliana (Mouse-ear cress)).